Here is a 135-residue protein sequence, read N- to C-terminus: Ribosome-binding factor A (135 aa).

It belongs to the RbfA family. As to quaternary structure, monomer. Binds 30S ribosomal subunits, but not 50S ribosomal subunits or 70S ribosomes.

It is found in the cytoplasm. Functionally, one of several proteins that assist in the late maturation steps of the functional core of the 30S ribosomal subunit. Associates with free 30S ribosomal subunits (but not with 30S subunits that are part of 70S ribosomes or polysomes). Required for efficient processing of 16S rRNA. May interact with the 5'-terminal helix region of 16S rRNA. The polypeptide is Ribosome-binding factor A (Aliivibrio fischeri (strain ATCC 700601 / ES114) (Vibrio fischeri)).